Reading from the N-terminus, the 184-residue chain is Protein GrpE (184 aa).

Residues 1–14 (MANEQNEQSQDLSS) are compositionally biased toward polar residues. Residues 1–35 (MANEQNEQSQDLSSEQTTQDHEQTQTEGVEQGAEI) are disordered.

This sequence belongs to the GrpE family. Homodimer.

The protein resides in the cytoplasm. Functionally, participates actively in the response to hyperosmotic and heat shock by preventing the aggregation of stress-denatured proteins, in association with DnaK and GrpE. It is the nucleotide exchange factor for DnaK and may function as a thermosensor. Unfolded proteins bind initially to DnaJ; upon interaction with the DnaJ-bound protein, DnaK hydrolyzes its bound ATP, resulting in the formation of a stable complex. GrpE releases ADP from DnaK; ATP binding to DnaK triggers the release of the substrate protein, thus completing the reaction cycle. Several rounds of ATP-dependent interactions between DnaJ, DnaK and GrpE are required for fully efficient folding. This chain is Protein GrpE, found in Acinetobacter baylyi (strain ATCC 33305 / BD413 / ADP1).